The primary structure comprises 366 residues: Galactoside alpha-(1,2)-fucosyltransferase 1 (366 aa).

At 1 to 8 (MWPRSHRH) the chain is on the cytoplasmic side. The helical; Signal-anchor for type II membrane protein transmembrane segment at 9–25 (LCLAFLLVCVLSAISFL) threads the bilayer. The Lumenal portion of the chain corresponds to 26-366 (IHFHQDSIRH…LSPLWPLAEP (341 aa)). Asparagine 66, asparagine 302, and asparagine 328 each carry an N-linked (GlcNAc...) asparagine glycan.

Belongs to the glycosyltransferase 11 family.

The protein resides in the golgi apparatus. It localises to the golgi stack membrane. It carries out the reaction a beta-D-galactosyl-(1-&gt;4)-N-acetyl-beta-D-glucosaminyl derivative + GDP-beta-L-fucose = an alpha-L-Fuc-(1-&gt;2)-beta-D-Gal-(1-&gt;4)-beta-D-GlcNAc derivative + GDP + H(+). It catalyses the reaction a ganglioside GA1 + GDP-beta-L-fucose = a ganglioside Fuc-GA1 + GDP + H(+). The catalysed reaction is a beta-D-Gal-(1-&gt;3)-beta-D-GlcNAc-(1-&gt;3)-beta-D-Gal-(1-&gt;4)-beta-D-Glc-(1&lt;-&gt;1')-Cer(d18:1(4E)) + GDP-beta-L-fucose = alpha-L-fucosyl-(1-&gt;2)- beta-D-galactosyl-(1-&gt;3)-N-acetyl-beta-D-glucosaminyl-(1-&gt;3)-beta-D-galactosyl-(1-&gt;4)-beta-D-glucosyl-(1&lt;-&gt;1')-N-acylsphing-4-enine + GDP + H(+). The enzyme catalyses a neolactoside nLc4Cer(d18:1(4E)) + GDP-beta-L-fucose = a neolactoside IV(2)-alpha-Fuc-nLc4Cer(d18:1(4E)) + GDP + H(+). It carries out the reaction a ganglioside GM1 + GDP-beta-L-fucose = a ganglioside Fuc-GM1 + GDP + H(+). It catalyses the reaction beta-D-galactosyl-(1-&gt;3)-N-acetyl-D-galactosamine + GDP-beta-L-fucose = alpha-L-fucosyl-(1-&gt;2)-beta-D-galactosyl-(1-&gt;3)-N-acetyl-D-galactosamine + GDP + H(+). It functions in the pathway protein modification; protein glycosylation. Catalyzes the transfer of L-fucose, from a guanosine diphosphate-beta-L-fucose, to the terminal galactose residue of glycoconjugates through an alpha(1,2) linkage leading to H antigen synthesis that is an intermediate substrate in the synthesis of ABO blood group antigens. H antigen is essential for maturation of the glomerular layer of the main olfactory bulb, in cell migration and early cell-cell contacts during tumor associated angiogenesis. Preferentially fucosylates soluble lactose and to a lesser extent fucosylates glycolipids gangliosides GA1 and GM1a. The sequence is that of Galactoside alpha-(1,2)-fucosyltransferase 1 from Saimiri sciureus (Common squirrel monkey).